The sequence spans 344 residues: Chalcone synthase A (344 aa).

Cysteine 167 is an active-site residue.

It belongs to the thiolase-like superfamily. Chalcone/stilbene synthases family.

It catalyses the reaction (E)-4-coumaroyl-CoA + 3 malonyl-CoA + 3 H(+) = 2',4,4',6'-tetrahydroxychalcone + 3 CO2 + 4 CoA. It participates in secondary metabolite biosynthesis; flavonoid biosynthesis. Its function is as follows. The primary product of this enzyme is 4,2',4',6'-tetrahydroxychalcone (also termed naringenin-chalcone or chalcone) which can under specific conditions spontaneously isomerize into naringenin. The polypeptide is Chalcone synthase A (CHSA) (Ipomoea nil (Japanese morning glory)).